Consider the following 67-residue polypeptide: Sec-independent protein translocase protein TatA (67 aa).

Residues 1-21 (MFGIGIQELLVVLVLVLLVFG) form a helical membrane-spanning segment. Residues 46 to 67 (PDEIDITPGKKNGKTDKDDKQA) are disordered. Residues 58–67 (GKTDKDDKQA) are compositionally biased toward basic and acidic residues.

The protein belongs to the TatA/E family. As to quaternary structure, the Tat system comprises two distinct complexes: a TatABC complex, containing multiple copies of TatA, TatB and TatC subunits, and a separate TatA complex, containing only TatA subunits. Substrates initially bind to the TatABC complex, which probably triggers association of the separate TatA complex to form the active translocon.

It localises to the cell inner membrane. Its function is as follows. Part of the twin-arginine translocation (Tat) system that transports large folded proteins containing a characteristic twin-arginine motif in their signal peptide across membranes. TatA could form the protein-conducting channel of the Tat system. The protein is Sec-independent protein translocase protein TatA of Nitratidesulfovibrio vulgaris (strain DSM 19637 / Miyazaki F) (Desulfovibrio vulgaris).